The primary structure comprises 735 residues: Ion-translocating oxidoreductase complex subunit C (735 aa).

2 4Fe-4S ferredoxin-type domains span residues 368 to 397 (MGAP…QQLY) and 407 to 436 (KATA…VQYF). [4Fe-4S] cluster is bound by residues cysteine 377, cysteine 380, cysteine 383, cysteine 387, cysteine 416, cysteine 419, cysteine 422, and cysteine 426. A disordered region spans residues 538–715 (KQAAHPMADS…PADPRKAAVA (178 aa)). Positions 556 to 565 (KAAVEAAIAR) are enriched in low complexity.

The protein belongs to the 4Fe4S bacterial-type ferredoxin family. RnfC subfamily. The complex is composed of six subunits: RsxA, RsxB, RsxC, RsxD, RsxE and RsxG. [4Fe-4S] cluster is required as a cofactor.

Its subcellular location is the cell inner membrane. Its function is as follows. Part of a membrane-bound complex that couples electron transfer with translocation of ions across the membrane. Required to maintain the reduced state of SoxR. The sequence is that of Ion-translocating oxidoreductase complex subunit C from Salmonella typhimurium (strain LT2 / SGSC1412 / ATCC 700720).